Here is a 590-residue protein sequence, read N- to C-terminus: Glutathione S-transferase T3 (590 aa).

The region spanning 1 to 82 (MKLKVYADRM…YLSSAYPSVV (82 aa)) is the GST N-terminal domain. Glutathione contacts are provided by residues 11–12 (SQ), 40–41 (QL), 53–54 (KV), and 66–67 (ES). The GST C-terminal domain maps to 89–232 (DLSKRARIHS…KDRCQKQREM (144 aa)). Positions 265 to 336 (DRRKHRRKWS…HCKQRWSKLN (72 aa)) constitute a Myb-like domain. The segment at 402–427 (SKGGGSSKRTKLNNGDRVYSSSSNPE) is disordered.

The protein belongs to the GST superfamily. Theta family.

The protein localises to the nucleus. The enzyme catalyses RX + glutathione = an S-substituted glutathione + a halide anion + H(+). Its function is as follows. May be involved in the conjugation of reduced glutathione to a wide number of exogenous and endogenous hydrophobic electrophiles and have a detoxification role against certain herbicides. In Arabidopsis thaliana (Mouse-ear cress), this protein is Glutathione S-transferase T3 (GSTT3).